The chain runs to 353 residues: Chemerin-like receptor 2 (353 aa).

Residues 1–41 lie on the Extracellular side of the membrane; that stretch reads MEVSKEMLFEELDNYSYALDYYSQESDPEEKVYLGLVHWIS. Asn-14 carries N-linked (GlcNAc...) asparagine glycosylation. A helical membrane pass occupies residues 42-62; that stretch reads LFLYALAFVLGIPGNAIVIWL. Over 63–73 the chain is Cytoplasmic; it reads MGFKWKKTVTT. A helical membrane pass occupies residues 74 to 94; that stretch reads LWFLNLAIADFIFVLFLPLYI. The Extracellular segment spans residues 95–112; the sequence is SYVALSFHWPFGLWLCKV. Cys-110 and Cys-187 are oxidised to a cystine. Residues 113–133 form a helical membrane-spanning segment; the sequence is NSFIAQLNMFSSVFFLTVISL. Over 134–154 the chain is Cytoplasmic; that stretch reads DRYIHLLHPGLSHRHRTLKSS. Residues 155–175 traverse the membrane as a helical segment; the sequence is LVVVILVWLLASLLGGPTLYF. The Extracellular portion of the chain corresponds to 176–210; the sequence is RDTMEVNNHIICYNNFQEHELTLMRHHVLTWVKFL. The chain crosses the membrane as a helical span at residues 211–231; it reads FGYLFPLLTMSSCYLCLIFKM. The Cytoplasmic segment spans residues 232–247; that stretch reads KKRNILISRKHLWMIL. The chain crosses the membrane as a helical span at residues 248-268; that stretch reads SVVIAFLVCWTPYHLFSIWEL. The Extracellular portion of the chain corresponds to 269–286; sequence SIHHNSSFQNVLQGGIPL. Residues 287 to 307 traverse the membrane as a helical segment; it reads STGLAFLNSCLNPILYVLISK. The Cytoplasmic portion of the chain corresponds to 308–353; that stretch reads TFQARFRASVAEVLKRSLWEASCSGTVSEQLRSAETKSLSLLETAQ.

The protein belongs to the chemokine-like receptor (CMKLR) family. High expressed in white adipose tissue and skeletal muscle. Expressed in hippocampus and cortex.

The protein localises to the cell membrane. In terms of biological role, receptor for chemoattractant adipokine chemerin/RARRES2 suggesting a role for this receptor in the regulation of inflammation and energy homesotasis. Signals mainly via beta-arrestin pathway. Binding of RARRES2 activates weakly G proteins, calcium mobilization and MAPK1/MAPK3 (ERK1/2) phosphorylation too. Acts also as a receptor for TAFA1, mediates its effects on neuronal stem-cell proliferation and differentiation via the activation of ROCK/ERK and ROCK/STAT3 signaling pathway. The protein is Chemerin-like receptor 2 (Cmklr2) of Mus musculus (Mouse).